The primary structure comprises 103 residues: Large ribosomal subunit protein bL21 (103 aa).

This sequence belongs to the bacterial ribosomal protein bL21 family. In terms of assembly, part of the 50S ribosomal subunit. Contacts protein L20.

In terms of biological role, this protein binds to 23S rRNA in the presence of protein L20. This Pasteurella multocida (strain Pm70) protein is Large ribosomal subunit protein bL21.